Reading from the N-terminus, the 20-residue chain is Putative antimicrobial protein 2 (20 aa).

The segment at 1–20 is disordered; that stretch reads DLPECCSATELELDSGKQTS.

May have antimicrobial activity. This Cenchritis muricatus (Beaded periwinkle) protein is Putative antimicrobial protein 2.